A 405-amino-acid chain; its full sequence is G1/S-specific cyclin-D (405 aa).

One can recognise a Cyclin N-terminal domain in the interval 76 to 200; that stretch reads FYNCMEYEEA…LIVTTLQWET (125 aa). A disordered region spans residues 301–405; sequence YTSEDAEKTE…STPPKIFKTL (105 aa). The segment covering 311–321 has biased composition (polar residues); the sequence is PTPSAPASTQE. Over residues 326 to 335 the composition is skewed to basic and acidic residues; that stretch reads QELKELKEEP. The span at 358–380 shows a compositional bias: polar residues; the sequence is SEQTPSTPLNDSGFSSDVSSPAS.

This sequence belongs to the cyclin family. Cyclin D subfamily. As to quaternary structure, interacts with cdk-4; the interaction is likely involved in regulating cdk-4 activity.

Functionally, in association with cdk-4, regulates the progression through the G1 phase of the cell cycle during postembryonic development. Regulates proliferation of the coelomocyte lineage and intestinal cells during late embryogenesis. In complex with cdk-4, involved in sex determination during gonadogenesis by regulating the asymmetric division of the somatic gonadal precursor cell (SGP). In Caenorhabditis elegans, this protein is G1/S-specific cyclin-D.